The sequence spans 339 residues: Phosphate acyltransferase (339 aa).

This sequence belongs to the PlsX family. As to quaternary structure, homodimer. Probably interacts with PlsY.

The protein resides in the cytoplasm. The enzyme catalyses a fatty acyl-[ACP] + phosphate = an acyl phosphate + holo-[ACP]. It participates in lipid metabolism; phospholipid metabolism. Catalyzes the reversible formation of acyl-phosphate (acyl-PO(4)) from acyl-[acyl-carrier-protein] (acyl-ACP). This enzyme utilizes acyl-ACP as fatty acyl donor, but not acyl-CoA. In Aeromonas salmonicida (strain A449), this protein is Phosphate acyltransferase.